The following is a 507-amino-acid chain: ATP synthase subunit alpha, chloroplastic (507 aa).

170–177 serves as a coordination point for ATP; it reads GDRQTGKT.

This sequence belongs to the ATPase alpha/beta chains family. In terms of assembly, F-type ATPases have 2 components, CF(1) - the catalytic core - and CF(0) - the membrane proton channel. CF(1) has five subunits: alpha(3), beta(3), gamma(1), delta(1), epsilon(1). CF(0) has four main subunits: a, b, b' and c.

It is found in the plastid. It localises to the chloroplast thylakoid membrane. It carries out the reaction ATP + H2O + 4 H(+)(in) = ADP + phosphate + 5 H(+)(out). Its function is as follows. Produces ATP from ADP in the presence of a proton gradient across the membrane. The alpha chain is a regulatory subunit. The sequence is that of ATP synthase subunit alpha, chloroplastic from Amborella trichopoda.